Consider the following 366-residue polypeptide: 3-dehydroquinate synthase (366 aa).

NAD(+) contacts are provided by residues 71-76 (DGEQYK), 105-109 (GVIGD), 129-130 (TT), Lys-142, Lys-151, and 169-172 (CLKT). The Zn(2+) site is built by Glu-184, His-247, and His-264.

It belongs to the sugar phosphate cyclases superfamily. Dehydroquinate synthase family. Co(2+) is required as a cofactor. Zn(2+) serves as cofactor. The cofactor is NAD(+).

It localises to the cytoplasm. The catalysed reaction is 7-phospho-2-dehydro-3-deoxy-D-arabino-heptonate = 3-dehydroquinate + phosphate. It participates in metabolic intermediate biosynthesis; chorismate biosynthesis; chorismate from D-erythrose 4-phosphate and phosphoenolpyruvate: step 2/7. Catalyzes the conversion of 3-deoxy-D-arabino-heptulosonate 7-phosphate (DAHP) to dehydroquinate (DHQ). The chain is 3-dehydroquinate synthase from Serratia proteamaculans (strain 568).